A 629-amino-acid chain; its full sequence is tRNA uridine 5-carboxymethylaminomethyl modification enzyme MnmG (629 aa).

Position 13-18 (13-18 (GGGHAG)) interacts with FAD. Position 273–287 (273–287 (GPRYCPSIEDKIVRF)) interacts with NAD(+).

It belongs to the MnmG family. In terms of assembly, homodimer. Heterotetramer of two MnmE and two MnmG subunits. It depends on FAD as a cofactor.

It localises to the cytoplasm. NAD-binding protein involved in the addition of a carboxymethylaminomethyl (cmnm) group at the wobble position (U34) of certain tRNAs, forming tRNA-cmnm(5)s(2)U34. This chain is tRNA uridine 5-carboxymethylaminomethyl modification enzyme MnmG, found in Marinomonas sp. (strain MWYL1).